The following is a 400-amino-acid chain: NADH-quinone oxidoreductase subunit D (400 aa).

Belongs to the complex I 49 kDa subunit family. NDH-1 is composed of 14 different subunits. Subunits NuoB, C, D, E, F, and G constitute the peripheral sector of the complex.

It localises to the cell inner membrane. The enzyme catalyses a quinone + NADH + 5 H(+)(in) = a quinol + NAD(+) + 4 H(+)(out). Its function is as follows. NDH-1 shuttles electrons from NADH, via FMN and iron-sulfur (Fe-S) centers, to quinones in the respiratory chain. The immediate electron acceptor for the enzyme in this species is believed to be menaquinone. Couples the redox reaction to proton translocation (for every two electrons transferred, four hydrogen ions are translocated across the cytoplasmic membrane), and thus conserves the redox energy in a proton gradient. The protein is NADH-quinone oxidoreductase subunit D of Prosthecochloris aestuarii (strain DSM 271 / SK 413).